A 244-amino-acid chain; its full sequence is Sortase B (244 aa).

Residues 1–6 (MRMKRF) lie on the Cytoplasmic side of the membrane. Residues 7–24 (LTIVQILLVVIIIIFGYK) form a helical membrane-spanning segment. Topologically, residues 25 to 244 (IVQTYIEDKQ…VVVAKIIKVS (220 aa)) are extracellular. Cys223 functions as the Acyl-thioester intermediate in the catalytic mechanism.

Belongs to the bacterial sortase family. Class B subfamily.

It localises to the cell membrane. It catalyses the reaction The enzyme catalyzes a cell wall sorting reaction in which a surface protein with a sorting signal containing a NPXTN motif is cleaved between the Thr and Asn residue. The resulting threonine carboxyl end of the protein is covalently attached to a pentaglycine cross-bridge of peptidoglycan.. Its activity is regulated as follows. Inhibited by MTSET (2-(Trimethylammonium)-ethyl-methanethiosulfonate) and E64 ([n- (l-3-trans-carboxyoxirane-2-carbonyl)-l-leucyl]-amido(4-guanido)butane). Inhibited by coptisine. Its function is as follows. Transpeptidase that anchors surface proteins to the cell wall. Recognizes and modifies its substrate by proteolytic cleavage of a C-terminal sorting signal. Following cleavage, a covalent intermediate is formed via a thioester bond between the sortase and its substrate, which is then transferred and covalently attached to the cell wall. This sortase recognizes an Asn-Pro-Gln-Thr-Asn (NPQTN) motif in IsdC, which is cleaved by the sortase between the threonine and aspargine residues; may only have 1 substrate in this bacterium. May be dedicated to the process of iron acquisition during bacterial infection. The chain is Sortase B from Staphylococcus aureus (strain NCTC 8325 / PS 47).